The primary structure comprises 311 residues: Coproporphyrin III ferrochelatase 1 (311 aa).

Fe-coproporphyrin III contacts are provided by residues Tyr12, Arg29, 45–46 (RY), Ser53, and Tyr124. Fe(2+) is bound by residues His182 and Glu263.

Belongs to the ferrochelatase family.

It is found in the cytoplasm. The enzyme catalyses Fe-coproporphyrin III + 2 H(+) = coproporphyrin III + Fe(2+). It participates in porphyrin-containing compound metabolism; protoheme biosynthesis. Its function is as follows. Involved in coproporphyrin-dependent heme b biosynthesis. Catalyzes the insertion of ferrous iron into coproporphyrin III to form Fe-coproporphyrin III. The sequence is that of Coproporphyrin III ferrochelatase 1 from Bacillus cereus (strain ATCC 10987 / NRS 248).